The chain runs to 246 residues: Nodulin-25 (246 aa).

The signal sequence occupies residues 1 to 24 (MVYSNTYMLLGLGVFVLLSSHVLA).

It is found in the symbiosome. The protein resides in the peribacteroid space. In terms of biological role, involved in the development and function of nodules. It might participate in the biological process of symbiotic nitrogen fixation. This Medicago sativa (Alfalfa) protein is Nodulin-25 (NMS-25).